The sequence spans 231 residues: 7-cyano-7-deazaguanine synthase (231 aa).

An ATP-binding site is contributed by 8–18; that stretch reads FSGGQDSTTCL. Zn(2+) contacts are provided by cysteine 188, cysteine 197, cysteine 200, and cysteine 203.

It belongs to the QueC family. It depends on Zn(2+) as a cofactor.

The catalysed reaction is 7-carboxy-7-deazaguanine + NH4(+) + ATP = 7-cyano-7-deazaguanine + ADP + phosphate + H2O + H(+). Its pathway is purine metabolism; 7-cyano-7-deazaguanine biosynthesis. Functionally, catalyzes the ATP-dependent conversion of 7-carboxy-7-deazaguanine (CDG) to 7-cyano-7-deazaguanine (preQ(0)). The chain is 7-cyano-7-deazaguanine synthase from Shigella flexneri serotype 5b (strain 8401).